A 146-amino-acid polypeptide reads, in one-letter code: Hemoglobin cathodic subunit beta (146 aa).

In terms of domain architecture, Globin spans 2–146 (EWSASERSTI…VVSALSKQYF (145 aa)). Heme b contacts are provided by histidine 63 and histidine 92.

Belongs to the globin family. Heterotetramer of two alpha chains and two beta chains. As to expression, red blood cells.

Functionally, involved in oxygen transport from gills to the various peripheral tissues. The polypeptide is Hemoglobin cathodic subunit beta (hbb2) (Anguilla anguilla (European freshwater eel)).